The sequence spans 143 residues: Large ribosomal subunit protein uL11 (143 aa).

This sequence belongs to the universal ribosomal protein uL11 family. In terms of assembly, part of the ribosomal stalk of the 50S ribosomal subunit. Interacts with L10 and the large rRNA to form the base of the stalk. L10 forms an elongated spine to which L12 dimers bind in a sequential fashion forming a multimeric L10(L12)X complex. Post-translationally, one or more lysine residues are methylated.

Functionally, forms part of the ribosomal stalk which helps the ribosome interact with GTP-bound translation factors. The chain is Large ribosomal subunit protein uL11 from Pseudomonas fluorescens (strain SBW25).